The sequence spans 359 residues: Peptide chain release factor 1 (359 aa).

The residue at position 236 (glutamine 236) is an N5-methylglutamine.

It belongs to the prokaryotic/mitochondrial release factor family. Methylated by PrmC. Methylation increases the termination efficiency of RF1.

Its subcellular location is the cytoplasm. Its function is as follows. Peptide chain release factor 1 directs the termination of translation in response to the peptide chain termination codons UAG and UAA. The polypeptide is Peptide chain release factor 1 (Lacticaseibacillus casei (strain BL23) (Lactobacillus casei)).